The following is a 455-amino-acid chain: MADQQEKTASSAVPETQPPSQTAETTTQTTATPAPEVQTEQTQPTESGPSAANTTTEQPTNPPAAEASKENAAPAPAPAAEDAPSEPAPAQEQQKEEKPADNKPEYLAKNPALSQLFDRLPTVLSNSGHDEMWGVPLRDSSDVPTVNVLIKFLRANEGNVKLAEDQLTKALQWRKQTRPTALVEGRYSAKKFGGLGYLSTYKDADGKETVITWNIYGGVKDLGTTFGNVDEFINWRVALMELAVKDLKMDQATSVIDYEGEDPYQMIQVHDYLNVSFLRMNPSVKAATKKTIDVFATAYPELLREKFFVNVPSIMGWMFAAIKVFLSKNTTRKFHPISNGANLAREFPPAVKEQFPKVYGGSAPDLHEGARTVALEEDNEPAPAPAAPAEPTEEAKPEQEAPKQEPAPEAPKEEAIKEALVEAPKEEPKQPAVEEPAKTDTAVTTQETVAPAEAK.

Residues 1-106 (MADQQEKTAS…EKPADNKPEY (106 aa)) form a disordered region. A compositionally biased stretch (low complexity) spans 14 to 40 (PETQPPSQTAETTTQTTATPAPEVQTE). Residues 41–59 (QTQPTESGPSAANTTTEQP) show a composition bias toward polar residues. Residues 63–82 (PAAEASKENAAPAPAPAAED) are compositionally biased toward low complexity. The span at 93-106 (QQKEEKPADNKPEY) shows a compositional bias: basic and acidic residues. The region spanning 179–367 (PTALVEGRYS…VYGGSAPDLH (189 aa)) is the CRAL-TRIO domain. The heme site is built by Tyr-216, Arg-236, His-270, Tyr-272, and Lys-306. Residues 376–455 (EEDNEPAPAP…QETVAPAEAK (80 aa)) are disordered. Composition is skewed to basic and acidic residues over residues 393 to 403 (EEAKPEQEAPK) and 410 to 429 (APKE…EEPK).

Belongs to the SFH5 family. Requires heme b as cofactor.

Its subcellular location is the cytoplasm. The protein resides in the endoplasmic reticulum membrane. It is found in the microsome membrane. It carries out the reaction a 1,2-diacyl-sn-glycero-3-phospho-(1D-myo-inositol)(in) = a 1,2-diacyl-sn-glycero-3-phospho-(1D-myo-inositol)(out). In terms of biological role, non-classical phosphatidylinositol (PtdIns) transfer protein (PITP), which exhibits PtdIns-binding/transfer activity in the absence of detectable PtdCho-binding/transfer activity. Regulates PtdIns(4,5)P2 homeostasis at the plasma membrane. Heme-binding protein that may play a role in organic oxidant-induced stress responses. This chain is Phosphatidylinositol transfer protein sfh5 (sfh5), found in Aspergillus oryzae (strain ATCC 42149 / RIB 40) (Yellow koji mold).